Here is a 221-residue protein sequence, read N- to C-terminus: Carotenogenesis protein CarR (221 aa).

The next 6 membrane-spanning stretches (helical) occupy residues 56 to 76, 79 to 99, 107 to 127, 136 to 156, 166 to 186, and 191 to 211; these read LGLL…PLLL, APLL…ALSP, LGVG…GAPH, VCTV…LFAL, AVVA…LACE, and HVLS…VVIS.

It localises to the cell inner membrane. Negative regulator of the carotenoid synthesis regulon. It is probably inactivated by protoporphyrin IX in the presence of blue light. Inactivation of CarR leads to loss of negative control over the carotenogenesis protein CarQ. In Myxococcus xanthus, this protein is Carotenogenesis protein CarR (carR).